A 424-amino-acid polypeptide reads, in one-letter code: Glutamate-1-semialdehyde 2,1-aminomutase (424 aa).

N6-(pyridoxal phosphate)lysine is present on K263.

The protein belongs to the class-III pyridoxal-phosphate-dependent aminotransferase family. HemL subfamily. Homodimer. Pyridoxal 5'-phosphate is required as a cofactor.

It is found in the cytoplasm. It carries out the reaction (S)-4-amino-5-oxopentanoate = 5-aminolevulinate. Its pathway is porphyrin-containing compound metabolism; protoporphyrin-IX biosynthesis; 5-aminolevulinate from L-glutamyl-tRNA(Glu): step 2/2. This chain is Glutamate-1-semialdehyde 2,1-aminomutase, found in Campylobacter jejuni subsp. jejuni serotype O:23/36 (strain 81-176).